Consider the following 319-residue polypeptide: Ribonuclease Z (319 aa).

Zn(2+) is bound by residues H62, H64, D66, H67, H139, D209, and H268. D66 serves as the catalytic Proton acceptor.

This sequence belongs to the RNase Z family. As to quaternary structure, homodimer. The cofactor is Zn(2+).

It catalyses the reaction Endonucleolytic cleavage of RNA, removing extra 3' nucleotides from tRNA precursor, generating 3' termini of tRNAs. A 3'-hydroxy group is left at the tRNA terminus and a 5'-phosphoryl group is left at the trailer molecule.. Its function is as follows. Zinc phosphodiesterase, which displays some tRNA 3'-processing endonuclease activity. Probably involved in tRNA maturation, by removing a 3'-trailer from precursor tRNA. The protein is Ribonuclease Z of Pseudomonas putida (strain ATCC 700007 / DSM 6899 / JCM 31910 / BCRC 17059 / LMG 24140 / F1).